A 232-amino-acid polypeptide reads, in one-letter code: LexA repressor (232 aa).

Positions 36–56 form a DNA-binding region, H-T-H motif; sequence IREIGDAAGLQSTSSVAYQLK. Basic and acidic residues predominate over residues 62–86; it reads GFLRRDPNKPRAVDVRHLPETDNRT. The segment at 62-107 is disordered; it reads GFLRRDPNKPRAVDVRHLPETDNRTKAGPKAKARPTAGASPQPELA. Active-site for autocatalytic cleavage activity residues include serine 156 and lysine 193.

This sequence belongs to the peptidase S24 family. In terms of assembly, homodimer.

The catalysed reaction is Hydrolysis of Ala-|-Gly bond in repressor LexA.. In terms of biological role, represses a number of genes involved in the response to DNA damage (SOS response), including recA and lexA. In the presence of single-stranded DNA, RecA interacts with LexA causing an autocatalytic cleavage which disrupts the DNA-binding part of LexA, leading to derepression of the SOS regulon and eventually DNA repair. This chain is LexA repressor, found in Corynebacterium efficiens (strain DSM 44549 / YS-314 / AJ 12310 / JCM 11189 / NBRC 100395).